A 195-amino-acid polypeptide reads, in one-letter code: MSNIKLIVGLANPGDKYEQTRHNAGAWYVNELARVCGVSLVADSKYYGLTARATLYGKDVRLLIPTTFMNLSGKSVGALANFFRIAPDEILVAHDELDMPPGVAKFKLGGGHGGHNGLKDIIAKLANDKGFYRLRIGIGHPGDKSMVSNYVLGKAPQTEQRLIEEVIDEAVRATEVLFKEDMSKAMHRLHSYKAG.

Residue tyrosine 17 participates in tRNA binding. The active-site Proton acceptor is the histidine 22. Phenylalanine 68, asparagine 70, and asparagine 116 together coordinate tRNA.

Belongs to the PTH family. As to quaternary structure, monomer.

It is found in the cytoplasm. The enzyme catalyses an N-acyl-L-alpha-aminoacyl-tRNA + H2O = an N-acyl-L-amino acid + a tRNA + H(+). Hydrolyzes ribosome-free peptidyl-tRNAs (with 1 or more amino acids incorporated), which drop off the ribosome during protein synthesis, or as a result of ribosome stalling. Its function is as follows. Catalyzes the release of premature peptidyl moieties from peptidyl-tRNA molecules trapped in stalled 50S ribosomal subunits, and thus maintains levels of free tRNAs and 50S ribosomes. The protein is Peptidyl-tRNA hydrolase of Shewanella loihica (strain ATCC BAA-1088 / PV-4).